Here is a 645-residue protein sequence, read N- to C-terminus: Threonine--tRNA ligase (645 aa).

One can recognise a TGS domain in the interval 1 to 62; it reads MSIHITFPDG…VEDGSLEIVT (62 aa). Residues 242 to 541 are catalytic; it reads DHRKLGKELD…LTEVYKGAFP (300 aa). Zn(2+) is bound by residues Cys-336, His-387, and His-518.

The protein belongs to the class-II aminoacyl-tRNA synthetase family. As to quaternary structure, homodimer. The cofactor is Zn(2+).

It is found in the cytoplasm. It carries out the reaction tRNA(Thr) + L-threonine + ATP = L-threonyl-tRNA(Thr) + AMP + diphosphate + H(+). In terms of biological role, catalyzes the attachment of threonine to tRNA(Thr) in a two-step reaction: L-threonine is first activated by ATP to form Thr-AMP and then transferred to the acceptor end of tRNA(Thr). Also edits incorrectly charged L-seryl-tRNA(Thr). The chain is Threonine--tRNA ligase from Enterococcus faecalis (strain ATCC 700802 / V583).